Here is a 347-residue protein sequence, read N- to C-terminus: Adenine deaminase (347 aa).

Positions 16, 18, and 204 each coordinate Zn(2+). E207 serves as the catalytic Proton donor. Residue D285 participates in Zn(2+) binding. Residue D286 participates in substrate binding.

The protein belongs to the metallo-dependent hydrolases superfamily. Adenosine and AMP deaminases family. Adenine deaminase type 2 subfamily. Requires Zn(2+) as cofactor.

It is found in the cytoplasm. The protein resides in the nucleus. It carries out the reaction adenine + H2O + H(+) = hypoxanthine + NH4(+). Its function is as follows. Catalyzes the hydrolytic deamination of adenine to hypoxanthine. Plays an important role in the purine salvage pathway and in nitrogen catabolism. The protein is Adenine deaminase of Candida glabrata (strain ATCC 2001 / BCRC 20586 / JCM 3761 / NBRC 0622 / NRRL Y-65 / CBS 138) (Yeast).